Consider the following 79-residue polypeptide: Protein FAM236C (79 aa).

Residues 19 to 48 (KGPQKDPEELVAVSDTAEDPSSGTGLPREP) are disordered.

The protein belongs to the FAM236 family.

The polypeptide is Protein FAM236C (Homo sapiens (Human)).